The following is a 285-amino-acid chain: Eukaryotic translation initiation factor 3 subunit F-2 (285 aa).

The region spanning 11–145 (VFIKPLVLFQ…TRLYCAVEIG (135 aa)) is the MPN domain.

Belongs to the eIF-3 subunit F family. As to quaternary structure, component of the eukaryotic translation initiation factor 3 (eIF-3) complex. The eIF-3 complex interacts with pix.

The protein resides in the cytoplasm. Its function is as follows. Component of the eukaryotic translation initiation factor 3 (eIF-3) complex, which is involved in protein synthesis of a specialized repertoire of mRNAs and, together with other initiation factors, stimulates binding of mRNA and methionyl-tRNAi to the 40S ribosome. The eIF-3 complex specifically targets and initiates translation of a subset of mRNAs involved in cell proliferation. The protein is Eukaryotic translation initiation factor 3 subunit F-2 of Drosophila yakuba (Fruit fly).